We begin with the raw amino-acid sequence, 405 residues long: Probable tRNA sulfurtransferase (405 aa).

Positions aspartate 60–leucine 165 constitute a THUMP domain. ATP-binding positions include methionine 183 to leucine 184, histidine 208 to phenylalanine 209, arginine 265, glycine 287, and glutamine 296.

The protein belongs to the ThiI family.

It is found in the cytoplasm. The enzyme catalyses [ThiI sulfur-carrier protein]-S-sulfanyl-L-cysteine + a uridine in tRNA + 2 reduced [2Fe-2S]-[ferredoxin] + ATP + H(+) = [ThiI sulfur-carrier protein]-L-cysteine + a 4-thiouridine in tRNA + 2 oxidized [2Fe-2S]-[ferredoxin] + AMP + diphosphate. It carries out the reaction [ThiS sulfur-carrier protein]-C-terminal Gly-Gly-AMP + S-sulfanyl-L-cysteinyl-[cysteine desulfurase] + AH2 = [ThiS sulfur-carrier protein]-C-terminal-Gly-aminoethanethioate + L-cysteinyl-[cysteine desulfurase] + A + AMP + 2 H(+). It functions in the pathway cofactor biosynthesis; thiamine diphosphate biosynthesis. Catalyzes the ATP-dependent transfer of a sulfur to tRNA to produce 4-thiouridine in position 8 of tRNAs, which functions as a near-UV photosensor. Also catalyzes the transfer of sulfur to the sulfur carrier protein ThiS, forming ThiS-thiocarboxylate. This is a step in the synthesis of thiazole, in the thiamine biosynthesis pathway. The sulfur is donated as persulfide by IscS. The protein is Probable tRNA sulfurtransferase of Lactobacillus gasseri (strain ATCC 33323 / DSM 20243 / BCRC 14619 / CIP 102991 / JCM 1131 / KCTC 3163 / NCIMB 11718 / NCTC 13722 / AM63).